The following is a 281-amino-acid chain: Probable endonuclease 4 (281 aa).

Positions 70, 110, 146, 180, 183, 217, 230, 232, and 262 each coordinate Zn(2+).

The protein belongs to the AP endonuclease 2 family. Zn(2+) is required as a cofactor.

It carries out the reaction Endonucleolytic cleavage to 5'-phosphooligonucleotide end-products.. Its function is as follows. Endonuclease IV plays a role in DNA repair. It cleaves phosphodiester bonds at apurinic or apyrimidinic (AP) sites, generating a 3'-hydroxyl group and a 5'-terminal sugar phosphate. This chain is Probable endonuclease 4, found in Nitratiruptor sp. (strain SB155-2).